A 157-amino-acid chain; its full sequence is UPF0251 protein CLK_0815 (157 aa).

The protein belongs to the UPF0251 family.

The polypeptide is UPF0251 protein CLK_0815 (Clostridium botulinum (strain Loch Maree / Type A3)).